A 142-amino-acid polypeptide reads, in one-letter code: uncharacterized protein (142 aa).

This is an uncharacterized protein from Invertebrate iridescent virus 3 (IIV-3).